The primary structure comprises 655 residues: 1-deoxy-D-xylulose-5-phosphate synthase (655 aa).

Residues His-73 and 114 to 116 (SHA) contribute to the thiamine diphosphate site. Residue Asp-145 coordinates Mg(2+). Thiamine diphosphate is bound by residues 146 to 147 (GA), Asn-174, Tyr-285, and Glu-367. Asn-174 lines the Mg(2+) pocket. The interval 626–655 (RQPAIEDDPTSPGEAAPAGERAGEAIGDQR) is disordered. The segment covering 646-655 (RAGEAIGDQR) has biased composition (basic and acidic residues).

Belongs to the transketolase family. DXPS subfamily. In terms of assembly, homodimer. Requires Mg(2+) as cofactor. Thiamine diphosphate is required as a cofactor.

It catalyses the reaction D-glyceraldehyde 3-phosphate + pyruvate + H(+) = 1-deoxy-D-xylulose 5-phosphate + CO2. The protein operates within metabolic intermediate biosynthesis; 1-deoxy-D-xylulose 5-phosphate biosynthesis; 1-deoxy-D-xylulose 5-phosphate from D-glyceraldehyde 3-phosphate and pyruvate: step 1/1. Its function is as follows. Catalyzes the acyloin condensation reaction between C atoms 2 and 3 of pyruvate and glyceraldehyde 3-phosphate to yield 1-deoxy-D-xylulose-5-phosphate (DXP). In Frankia casuarinae (strain DSM 45818 / CECT 9043 / HFP020203 / CcI3), this protein is 1-deoxy-D-xylulose-5-phosphate synthase.